Here is a 151-residue protein sequence, read N- to C-terminus: Transcriptional repressor NrdR (151 aa).

The segment at Cys-3 to Cys-34 is a zinc-finger region. Residues Ile-49 to Thr-139 form the ATP-cone domain.

This sequence belongs to the NrdR family. It depends on Zn(2+) as a cofactor.

Its function is as follows. Negatively regulates transcription of bacterial ribonucleotide reductase nrd genes and operons by binding to NrdR-boxes. In Clostridium botulinum (strain ATCC 19397 / Type A), this protein is Transcriptional repressor NrdR.